Reading from the N-terminus, the 638-residue chain is Sodium- and chloride-dependent glycine transporter 1 (638 aa).

Residues 1-29 (MAAAQGPVAPSSLEQNGAVPSEATKKDQN) form a disordered region. Over 1-40 (MAAAQGPVAPSSLEQNGAVPSEATKKDQNLKRGNWGNQIE) the chain is Cytoplasmic. 3 helical membrane passes run 41–61 (FVLT…FPYL), 69–88 (AFMF…LFFM), and 112–132 (GVGY…NVVI). The Extracellular segment spans residues 133–219 (CIAFYYFFSS…DDIGNFGEVR (87 aa)). N-linked (GlcNAc...) asparagine glycans are attached at residues asparagine 169, asparagine 172, asparagine 182, and asparagine 188. The next 9 helical transmembrane spans lie at 220 to 238 (LPLL…LCLI), 247 to 264 (VVYF…ILFI), 300 to 317 (IFYS…MASY), 329 to 350 (VIIS…FSIL), 383 to 402 (LPIS…LLGL), 431 to 449 (YVTL…PLTS), 465 to 485 (SFSL…IYGH), 506 to 525 (ICWR…FSVI), and 544 to 562 (IGFL…YALF). The Cytoplasmic portion of the chain corresponds to 563–638 (QFCRTDGDTL…GSSRFQDSRI (76 aa)). Residues 597–638 (RYAPTTTPSPEDGLEVQPLHPDKAQIPMVGSNGSSRFQDSRI) form a disordered region. At threonine 603 the chain carries Phosphothreonine. Phosphoserine is present on residues serine 605 and serine 630. The essential for interaction with EXOC1 stretch occupies residues 627 to 638 (SNGSSRFQDSRI). Residues 627–638 (SNGSSRFQDSRI) are compositionally biased toward polar residues.

The protein belongs to the sodium:neurotransmitter symporter (SNF) (TC 2.A.22) family. SLC6A9 subfamily. Interacts with EXOC1; interaction increases the transporter capacity of SLC6A9 probably by promoting its insertion into the cell membrane. Interacts with EXOC3 and EXOC4.

The protein resides in the cell membrane. It carries out the reaction glycine(out) + chloride(out) + 2 Na(+)(out) = glycine(in) + chloride(in) + 2 Na(+)(in). Its function is as follows. Sodium- and chloride-dependent glycine transporter which is essential for regulating glycine concentrations at inhibitory glycinergic synapses. The sequence is that of Sodium- and chloride-dependent glycine transporter 1 (SLC6A9) from Bos taurus (Bovine).